Here is a 274-residue protein sequence, read N- to C-terminus: Rhamnulose-1-phosphate aldolase (274 aa).

Residue Glu117 is part of the active site. Zn(2+)-binding residues include His141, His143, and His212.

This sequence belongs to the aldolase class II family. RhaD subfamily. Homotetramer. Zn(2+) serves as cofactor.

Its subcellular location is the cytoplasm. It carries out the reaction L-rhamnulose 1-phosphate = (S)-lactaldehyde + dihydroxyacetone phosphate. It functions in the pathway carbohydrate degradation; L-rhamnose degradation; glycerone phosphate from L-rhamnose: step 3/3. Functionally, catalyzes the reversible cleavage of L-rhamnulose-1-phosphate to dihydroxyacetone phosphate (DHAP) and L-lactaldehyde. The polypeptide is Rhamnulose-1-phosphate aldolase (Escherichia coli O81 (strain ED1a)).